We begin with the raw amino-acid sequence, 59 residues long: Photosystem II reaction center protein K (59 aa).

Residues 1-22 constitute a propeptide that is removed on maturation; sequence MLNIFSLIGLNSALYSSSCFFA. Residues 30–50 traverse the membrane as a helical segment; the sequence is FLSPIVDFMPVIPLLFFLLAF.

Belongs to the PsbK family. PSII is composed of 1 copy each of membrane proteins PsbA, PsbB, PsbC, PsbD, PsbE, PsbF, PsbH, PsbI, PsbJ, PsbK, PsbL, PsbM, PsbT, PsbX, PsbY, PsbZ, Psb30/Ycf12, at least 3 peripheral proteins of the oxygen-evolving complex and a large number of cofactors. It forms dimeric complexes.

It localises to the plastid. The protein resides in the chloroplast thylakoid membrane. One of the components of the core complex of photosystem II (PSII). PSII is a light-driven water:plastoquinone oxidoreductase that uses light energy to abstract electrons from H(2)O, generating O(2) and a proton gradient subsequently used for ATP formation. It consists of a core antenna complex that captures photons, and an electron transfer chain that converts photonic excitation into a charge separation. The polypeptide is Photosystem II reaction center protein K (Silene latifolia (White campion)).